The chain runs to 134 residues: Large-conductance mechanosensitive channel (134 aa).

2 helical membrane passes run 16-36 and 81-101; these read VIDL…VTAL and GDFL…FIIV.

The protein belongs to the MscL family. In terms of assembly, homopentamer.

It localises to the cell inner membrane. Channel that opens in response to stretch forces in the membrane lipid bilayer. May participate in the regulation of osmotic pressure changes within the cell. This Xylella fastidiosa (strain M12) protein is Large-conductance mechanosensitive channel.